The sequence spans 239 residues: MKPLLSLDRVSVSRDGRNVLDKLSLSLAAGERLALIGDNGVGKTTLLRTIVGLEPASGEITAFGINCRNESDFRKIRAKAAYLFQNPDDQLFCPTVIDDVAFGPLNLGLSRQEAMELSNGLLHDLGLGHLAGRITHHLSGGEKRLVSLAAVLAMQPQVLLLDEPTNALDEKHLERMLAILSAQKIAMIIVSHDWEILERLTDRAVVLRNGKLLPAMLHRHSQWSEQVHLHYVEAEGSAL.

The 230-residue stretch at 5–234 (LSLDRVSVSR…EQVHLHYVEA (230 aa)) folds into the ABC transporter domain. 37–44 (GDNGVGKT) lines the ATP pocket.

Belongs to the ABC transporter superfamily.

The protein resides in the cell inner membrane. Its function is as follows. Probably part of an ABC transporter complex. Responsible for energy coupling to the transport system. The chain is Putative ABC transporter ATP-binding protein BR1368/BS1330_I1363 from Brucella suis biovar 1 (strain 1330).